A 143-amino-acid chain; its full sequence is Transcriptional regulator MraZ (143 aa).

2 SpoVT-AbrB domains span residues 5 to 47 (EYQH…PKEE) and 76 to 119 (AGEC…SRER).

Belongs to the MraZ family. In terms of assembly, forms oligomers.

Its subcellular location is the cytoplasm. It is found in the nucleoid. The chain is Transcriptional regulator MraZ from Heliobacterium modesticaldum (strain ATCC 51547 / Ice1).